A 1097-amino-acid polypeptide reads, in one-letter code: MVNNNKRKEIENQENDNDDDNDGLLTYKKFKDVDYDSIRSKELQTIAKSLGLPNNGKKQEVYKRIEGYFLSKKVKNDLTNSTTNQPPQLQQKQPQQKQYVLLIKDVDQLEIYFWKAFRNMIIFKNIFSNFKSKQFGYHDLIGINENFLKSYSNSLEIIKDNIKGNINHQIIRSVNDIVNIIKTLKKKDNETISFYTTLFSTFSSSSSTTTTMQSTKSLIFQFDENIDLWIQRMILNENLVALDQFIKFFKINSDVLKKSIEMHINPSFFNVFSYNNLKIYNYLKSINAIPTSHIKQRFSNIDLSESLSFDYKFKRLIKSYKLLVDPTKFKEIREIHQQQQQQQQQQQQQQQQQQQEQQKQQEQKQQQQEQEQQQQQQQQQQQQQQQQQEQQQQQEQQQQEQQQEQEQQQQQQQEEQQQEQQQQQQQQQQQQEQQEQEQQQQQQQQQQQQQQQQQQQQQQQQQQQQQQQQQQQQQQQQQQQQQQQQQQQQQQQQQQREGRQLQILDYIEKLDQLILELNEIQFSHFTDDQLNSTIKNLLNQTKTTTTTPILITNNNNCSDLKDIIKKYYKSIYLFLKIIEEGKHDRNLMRPFHYYLYFKKKMNVSQLYEIFCGFFIKKYDDCLIFFKSILIDQQLERNQRLELVSKILDIENGVSFQNIGSNFNFTSFNSFCRVVFSTNDTELIDHLIKTIKKLQLAQNSKTQFPSISYIISINFQYINKNEIVDFFFENYRNETTLFDDQNQNWNNNHVNIIDHIEKIMESIGKKLQLYFVKYSNWFTNGNKNNEKKYNVNILLDQLKRAISKPLLYSFFFDSGYYCNTTLLNIFGWSLENGNEVVINFFLPNEIFKQPFRFSDIIYGAPSPNKIPNLIKLIFNNISKESIEPKLYQVKGNFNIPHLYYGRDDFIPLTSTISTTNSEEVGQFIIGETKSFDFIISPRMLFICLYYLDRFEDIFYLFDKIPEIFSSTYFPNFTKESYLYNICSSYYLELLINYFIENLNDNTINHLYNCLCVASGKGFTQIFKNILSSNKNSQSLLKVRTKTNQSSLFQLNFLCGMVLKSIDSSNFQLSNLLIDSIDFPPKNKRVLNQKYLVHLIINK.

A compositionally biased stretch (basic and acidic residues) spans 1–11 (MVNNNKRKEIE). The interval 1–24 (MVNNNKRKEIENQENDNDDDNDGL) is disordered. Positions 12-22 (NQENDNDDDND) are enriched in acidic residues. The region spanning 35–69 (YDSIRSKELQTIAKSLGLPNNGKKQEVYKRIEGYF) is the SAP domain. Residues 329-521 (FKEIREIHQQ…QLILELNEIQ (193 aa)) are a coiled coil.

It belongs to the UPF0746 family.

The chain is UPF0746 protein DDB_G0281095 from Dictyostelium discoideum (Social amoeba).